Consider the following 436-residue polypeptide: GTPase Der (436 aa).

EngA-type G domains are found at residues 4–167 (PVVA…PKRG) and 176–351 (IKFC…ENHA). GTP contacts are provided by residues 10–17 (GRPNVGKS), 57–61 (DTGGI), 119–122 (NKID), 182–189 (GRPNVGKS), 229–233 (DTAGM), and 294–297 (NKWD). The 85-residue stretch at 352-436 (MRVQTNVLNE…PIKIIARPRK (85 aa)) folds into the KH-like domain.

Belongs to the TRAFAC class TrmE-Era-EngA-EngB-Septin-like GTPase superfamily. EngA (Der) GTPase family. As to quaternary structure, associates with the 50S ribosomal subunit.

In terms of biological role, GTPase that plays an essential role in the late steps of ribosome biogenesis. The chain is GTPase Der from Geobacillus sp. (strain WCH70).